A 226-amino-acid polypeptide reads, in one-letter code: Enolase-phosphatase E1 (226 aa).

The protein belongs to the HAD-like hydrolase superfamily. MasA/MtnC family. In terms of assembly, monomer. The cofactor is Mg(2+).

It catalyses the reaction 5-methylsulfanyl-2,3-dioxopentyl phosphate + H2O = 1,2-dihydroxy-5-(methylsulfanyl)pent-1-en-3-one + phosphate. It functions in the pathway amino-acid biosynthesis; L-methionine biosynthesis via salvage pathway; L-methionine from S-methyl-5-thio-alpha-D-ribose 1-phosphate: step 3/6. It participates in amino-acid biosynthesis; L-methionine biosynthesis via salvage pathway; L-methionine from S-methyl-5-thio-alpha-D-ribose 1-phosphate: step 4/6. In terms of biological role, bifunctional enzyme that catalyzes the enolization of 2,3-diketo-5-methylthiopentyl-1-phosphate (DK-MTP-1-P) into the intermediate 2-hydroxy-3-keto-5-methylthiopentenyl-1-phosphate (HK-MTPenyl-1-P), which is then dephosphorylated to form the acireductone 1,2-dihydroxy-3-keto-5-methylthiopentene (DHK-MTPene). In Shewanella baltica (strain OS223), this protein is Enolase-phosphatase E1.